The following is a 632-amino-acid chain: Actin-related protein 8 (632 aa).

The segment covering 1–30 (MTQAEREQENGKEKEKEREKEKEKEKEQRG) has biased composition (basic and acidic residues). The tract at residues 1 to 43 (MTQAEREQENGKEKEKEREKEKEKEKEQRGIKRPIAPPVIPEP) is disordered. 288–291 (DVGD) is an ATP binding site. Disordered stretches follow at residues 410–429 (MTSL…DEHY) and 434–494 (QSKQ…GGAE). Residues 434-443 (QSKQDQSSKA) show a composition bias toward low complexity.

It belongs to the actin family. ARP8 subfamily. Component of the chromatin remodeling INO80 complex; specifically part of a complex module associated with the DBINO domain of INO80. Exists as monomers and dimers, but the dimer is most probably the biologically relevant form required for stable interactions with histones that exploits the twofold symmetry of the nucleosome core.

Its subcellular location is the nucleus. The protein resides in the chromosome. In terms of biological role, plays an important role in the functional organization of mitotic chromosomes. Exhibits low basal ATPase activity, and unable to polymerize. Proposed core component of the chromatin remodeling INO80 complex which is involved in transcriptional regulation, DNA replication and probably DNA repair. Required for the recruitment of INO80 (and probably the INO80 complex) to sites of DNA damage Strongly prefer nucleosomes and H3-H4 tetramers over H2A-H2B dimers, suggesting it may act as a nucleosome recognition module within the complex. This chain is Actin-related protein 8 (actr8), found in Salmo salar (Atlantic salmon).